A 568-amino-acid polypeptide reads, in one-letter code: Phosphoribosylaminoimidazole carboxylase (568 aa).

One can recognise an ATP-grasp domain in the interval 110 to 298 (KNHLIKHDVA…QFEAHVRAVT (189 aa)). Position 138–193 (138–193 (GEKFGYPYMLKSRTLAYDGRGNFVVKDKSYCEKALEFLKDRPLYAEKWCPFTKELA)) interacts with ATP.

This sequence in the C-terminal section; belongs to the AIR carboxylase family. Class I subfamily.

The catalysed reaction is 5-amino-1-(5-phospho-D-ribosyl)imidazole-4-carboxylate + H(+) = 5-amino-1-(5-phospho-beta-D-ribosyl)imidazole + CO2. It participates in purine metabolism; IMP biosynthesis via de novo pathway; 5-amino-1-(5-phospho-D-ribosyl)imidazole-4-carboxylate from 5-amino-1-(5-phospho-D-ribosyl)imidazole (carboxylase route): step 1/1. The sequence is that of Phosphoribosylaminoimidazole carboxylase (ADE2) from Candida albicans (strain SC5314 / ATCC MYA-2876) (Yeast).